The primary structure comprises 310 residues: UDP-N-acetylenolpyruvoylglucosamine reductase (310 aa).

The region spanning 35–203 is the FAD-binding PCMH-type domain; sequence RAGGAAEALV…TRVRFALRKG (169 aa). Arg183 is a catalytic residue. Catalysis depends on Ser232, which acts as the Proton donor. Glu302 is an active-site residue.

Belongs to the MurB family. Requires FAD as cofactor.

It is found in the cytoplasm. The catalysed reaction is UDP-N-acetyl-alpha-D-muramate + NADP(+) = UDP-N-acetyl-3-O-(1-carboxyvinyl)-alpha-D-glucosamine + NADPH + H(+). It functions in the pathway cell wall biogenesis; peptidoglycan biosynthesis. Cell wall formation. The protein is UDP-N-acetylenolpyruvoylglucosamine reductase of Myxococcus xanthus (strain DK1622).